Consider the following 428-residue polypeptide: Sialidase-3 (428 aa).

The FRIP motif motif lies at 24-27 (YRIP). Substrate-binding residues include R25 and R45. The active-site Proton acceptor is the D50. The BNR 1 repeat unit spans residues 129–140 (IYSQDAGCSWSE). 2 residues coordinate substrate: Y179 and Y181. The BNR 2 repeat unit spans residues 203–214 (IYSDDLGVTWHH). The substrate site is built by E225 and R245. The stretch at 254 to 265 (ALSTDHGEGFQR) is one BNR 3 repeat. The interval 294–318 (RCQDSSSKDAPTIQQSSPGSSLRLE) is disordered. A compositionally biased stretch (polar residues) spans 301–313 (KDAPTIQQSSPGS). S313 is modified (phosphoserine). R340 serves as a coordination point for substrate. Y370 (nucleophile) is an active-site residue. E387 is an active-site residue.

Belongs to the glycosyl hydrolase 33 family. As to quaternary structure, interacts with CAV1; this interaction enhances NEU3 sialidase activity within caveola. Interacts with EGFR; this interaction mediates desialylation of EGFR and enhances downstream signaling. Post-translationally, palmitoylated; may regulate intracellular trafficking and anchorage to plasma membrane and endomembranes. Highly expressed in skeletal muscle, testis, adrenal gland and thymus, followed by pancreas, liver, heart and thymus. Weakly expressed in kidney, placenta, brain and lung.

The protein resides in the cell membrane. Its subcellular location is the membrane. It is found in the caveola. It localises to the early endosome membrane. The protein localises to the recycling endosome membrane. The protein resides in the lysosome membrane. The catalysed reaction is Hydrolysis of alpha-(2-&gt;3)-, alpha-(2-&gt;6)-, alpha-(2-&gt;8)- glycosidic linkages of terminal sialic acid residues in oligosaccharides, glycoproteins, glycolipids, colominic acid and synthetic substrates.. It catalyses the reaction a ganglioside GD1a + H2O = a ganglioside GM1 + N-acetylneuraminate. The enzyme catalyses a ganglioside GD1a (d18:1(4E)) + H2O = a ganglioside GM1 (d18:1(4E)) + N-acetylneuraminate. It carries out the reaction a ganglioside GD1b + H2O = a ganglioside GM1 + N-acetylneuraminate. The catalysed reaction is a ganglioside GD1b (d18:1(4E)) + H2O = a ganglioside GM1 (d18:1(4E)) + N-acetylneuraminate. It catalyses the reaction a ganglioside GD3 + H2O = a ganglioside GM3 + N-acetylneuraminate. The enzyme catalyses a ganglioside GD3 (d18:1(4E)) + H2O = a ganglioside GM3 (d18:1(4E)) + N-acetylneuraminate. It carries out the reaction a ganglioside GM3 + H2O = a beta-D-galactosyl-(1-&gt;4)-beta-D-glucosyl-(1&lt;-&gt;1)-ceramide + N-acetylneuraminate. The catalysed reaction is a ganglioside GM1 + H2O = a ganglioside GA1 + N-acetylneuraminate. It catalyses the reaction a ganglioside GM1 (d18:1(4E)) + H2O = a ganglioside GA1 (d18:1(4E)) + N-acetylneuraminate. The enzyme catalyses a ganglioside GM2 (d18:1(4E)) + H2O = a ganglioside GA2 (d18:1(4E)) + N-acetylneuraminate. It carries out the reaction a ganglioside GM3 (d18:1(4E)) + H2O = a beta-D-Gal-(1-&gt;4)-beta-D-Glc-(1&lt;-&gt;1)-Cer(d18:1(4E)) + N-acetylneuraminate. The catalysed reaction is a ganglioside GT1b + H2O = a ganglioside GD1b + N-acetylneuraminate. Exo-alpha-sialidase that catalyzes the hydrolytic cleavage of the terminal sialic acid (N-acetylneuraminic acid, Neu5Ac) of a glycan moiety in the catabolism of glycolipids, glycoproteins and oligosacharides. Displays high catalytic efficiency for gangliosides including alpha-(2-&gt;3)-sialylated GD1a and GM3 and alpha-(2-&gt;8)-sialylated GD3. Plays a role in the regulation of transmembrane signaling through the modulation of ganglioside content of the lipid bilayer and by direct interaction with signaling receptors, such as EGFR. Desialylates EGFR and activates downstream signaling in proliferating cells. Contributes to clathrin-mediated endocytosis by regulating sorting of endocytosed receptors to early and recycling endosomes. This chain is Sialidase-3 (NEU3), found in Homo sapiens (Human).